A 245-amino-acid polypeptide reads, in one-letter code: rRNA adenine N-6-methyltransferase (245 aa).

Asn10, Leu12, Gly37, Glu58, Asp83, and Asn100 together coordinate S-adenosyl-L-methionine.

Belongs to the class I-like SAM-binding methyltransferase superfamily. rRNA adenine N(6)-methyltransferase family.

The catalysed reaction is adenosine(2085) in 23S rRNA + 2 S-adenosyl-L-methionine = N(6)-dimethyladenosine(2085) in 23S rRNA + 2 S-adenosyl-L-homocysteine + 2 H(+). This protein produces a dimethylation of the adenine residue at position 2085 in 23S rRNA, resulting in reduced affinity between ribosomes and macrolide-lincosamide-streptogramin B antibiotics. The chain is rRNA adenine N-6-methyltransferase (ermB) from Enterococcus faecalis (strain ATCC 700802 / V583).